Reading from the N-terminus, the 501-residue chain is uncharacterized protein (501 aa).

The 224-residue stretch at 14 to 237 folds into the BAR domain; it reads EKFGFDRQKT…GFSKKRDNVN (224 aa). Position 285 is a phosphothreonine (threonine 285). 2 disordered regions span residues 302–321 and 329–414; these read IASSNRTQHTEDNYNKDVSD and SAVD…RSYS. Residues 309–320 are compositionally biased toward basic and acidic residues; sequence QHTEDNYNKDVS. Over residues 390–402 the composition is skewed to polar residues; sequence SQCNVSPSPSNIS. Serine 414 is subject to Phosphoserine. The 67-residue stretch at 421 to 487 folds into the SH3 domain; it reads SSRKVVRMKY…PSNYCVPAHP (67 aa).

It is found in the cytoplasm. This is an uncharacterized protein from Schizosaccharomyces pombe (strain 972 / ATCC 24843) (Fission yeast).